Consider the following 473-residue polypeptide: Glutamate--tRNA ligase (473 aa).

The 'HIGH' region signature appears at 11–21; that stretch reads PSPTGFLHIGG. A 'KMSKS' region motif is present at residues 240 to 244; it reads KLSKR. Lys243 contributes to the ATP binding site.

It belongs to the class-I aminoacyl-tRNA synthetase family. Glutamate--tRNA ligase type 1 subfamily. Monomer.

It localises to the cytoplasm. The enzyme catalyses tRNA(Glu) + L-glutamate + ATP = L-glutamyl-tRNA(Glu) + AMP + diphosphate. In terms of biological role, catalyzes the attachment of glutamate to tRNA(Glu) in a two-step reaction: glutamate is first activated by ATP to form Glu-AMP and then transferred to the acceptor end of tRNA(Glu). In Rhodopseudomonas palustris (strain BisB5), this protein is Glutamate--tRNA ligase.